Here is a 681-residue protein sequence, read N- to C-terminus: T-box-containing protein 2 (681 aa).

The T-box DNA-binding region spans 149 to 323 (LWDQFSRAGT…NNPFAKGFRE (175 aa)). 4 disordered regions span residues 316–351 (PFAK…EQRR), 456–489 (GITS…NQSN), 521–558 (PNIN…LIPG), and 589–611 (ESGE…CQSG). Positions 470-489 (NSFTYYNSSSPSSSDSNQSN) are enriched in low complexity. Over residues 521-534 (PNINIPNTVETNVH) the composition is skewed to polar residues.

In terms of assembly, monomer. In terms of tissue distribution, differentiating muscle and tailbud tip.

Its subcellular location is the nucleus. Functionally, involved in the transcriptional regulation of genes required for muscle differentiation. Binds to a palindromic site (called T site) and activates gene transcription when bound to such a site. This chain is T-box-containing protein 2 (T2), found in Halocynthia roretzi (Sea squirt).